The chain runs to 182 residues: Ribulose bisphosphate carboxylase small subunit, chloroplastic 3 (182 aa).

The transit peptide at 1 to 41 (MASIMMNKSVVLSKECAKPLASPKVTLNKRGFATTIATKNR) directs the protein to the chloroplast.

The protein belongs to the RuBisCO small chain family. In terms of assembly, heterohexadecamer of 8 large and 8 small subunits.

It is found in the plastid. The protein resides in the chloroplast. Its function is as follows. RuBisCO catalyzes two reactions: the carboxylation of D-ribulose 1,5-bisphosphate, the primary event in carbon dioxide fixation, as well as the oxidative fragmentation of the pentose substrate. Both reactions occur simultaneously and in competition at the same active site. Although the small subunit is not catalytic it is essential for maximal activity. The sequence is that of Ribulose bisphosphate carboxylase small subunit, chloroplastic 3 from Acetabularia acetabulum (Mermaid's wine glass).